The following is a 305-amino-acid chain: Thyroxine 5-deiodinase (305 aa).

Over 1–43 the chain is Cytoplasmic; it reads MPGQAGRRRLVGGGCRGSQGPLGGAATMLRSLLLHSLRLCAQT. Residues 44-63 form a helical; Signal-anchor for type II membrane protein membrane-spanning segment; sequence ASCLVLFPRFLGTACMLWLL. Residues 64–305 lie on the Extracellular side of the membrane; the sequence is DFLCIRKHLL…QLHGPQPRRV (242 aa). A disordered region spans residues 79–98; the sequence is GEPETEVELNSDGDEVPPDD. Residues 82–96 show a composition bias toward acidic residues; it reads ETEVELNSDGDEVPP. U171 is a catalytic residue. A non-standard amino acid (selenocysteine) is located at residue U171.

The protein belongs to the iodothyronine deiodinase family. Monomer. Homodimer. May undergo minor heretodimerization with DIO1 and DIO2. As to expression, expressed in brain only.

It localises to the cell membrane. The protein localises to the endosome membrane. The enzyme catalyses 3,3',5'-triiodo-L-thyronine + iodide + A + H(+) = L-thyroxine + AH2. It catalyses the reaction 3,3'-diiodo-L-thyronine + iodide + A + H(+) = 3,3',5-triiodo-L-thyronine + AH2. The catalysed reaction is 3-iodo-L-thyronine + iodide + A + H(+) = 3,5-diiodo-L-thyronine + AH2. It carries out the reaction L-thyronine + iodide + A + H(+) = 3-iodo-L-thyronine + AH2. The enzyme catalyses 3',5'-diiodo-L-thyronine + iodide + A + H(+) = 3,3',5'-triiodo-L-thyronine + AH2. It catalyses the reaction 3'-iodo-L-thyronine + iodide + A + H(+) = 3,3'-diiodo-L-thyronine + AH2. The catalysed reaction is 3,3',5'-triiodothyronamine + iodide + A + H(+) = 3,3',5,5'-tetraiodothyronamine + AH2. It carries out the reaction 3',5'-diiodothyronamine + iodide + A + H(+) = 3,3',5'-triiodothyronamine + AH2. The enzyme catalyses 3,3'-diiodothyronamine + iodide + A + H(+) = 3,3',5-triiodothyronamine + AH2. It catalyses the reaction 3-iodothyronamine + iodide + A + H(+) = 3,5-diiodothyronamine + AH2. The catalysed reaction is 3'-iodothyronamine + iodide + A + H(+) = 3,3'-diiodothyronamine + AH2. It carries out the reaction thyronamine + iodide + A + H(+) = 3-iodothyronamine + AH2. Functionally, plays a crucial role in the metabolism of thyroid hormones (TH) and has specific roles in TH activation and inactivation by deiodination, particularly in different tissues. Catalyzes the deiodination of L-thyroxine (T4) to 3,3',5'-triiodothyronine (rT3), 3,5-diiodothyronine (3,5-T2) to 3-monoiodothyronine (3-T1), rT3 to 3',5'-diiodothyronine (3',5'-T2) and 3,3'-diiodothyronine (3,3'-T2) to 3'-monoiodothyronine (3'-T1) via inner-ring deiodination (IRD). Catalyzes the deiodination of 3,5,3'-triiodothyronine (T3) to 3,3'-diiodothyronine (3,3'-T2) via IRD. Catalyzes the deiodination of 3-T1 to L-thyronine (T0) via outer-ring deiodination (ORD). Catalyzes the tyrosyl ring deiodinations of 3,3',5,5'-tetraiodothyronamine, 3,3',5'-triiodothyronamine, 3,5,3'-triiodothyronamine, 3,5-diiodothyronamine, 3,3'-diiodothyronamine and 3-iodothyronamine. This Sus scrofa (Pig) protein is Thyroxine 5-deiodinase (DIO3).